Reading from the N-terminus, the 152-residue chain is Xanthine-guanine phosphoribosyltransferase (152 aa).

Residues arginine 37–glycine 38, arginine 69, and aspartate 88–threonine 96 contribute to the 5-phospho-alpha-D-ribose 1-diphosphate site. Arginine 69 serves as a coordination point for GMP. Position 89 (aspartate 89) interacts with Mg(2+). The guanine site is built by aspartate 92 and isoleucine 135. Positions 92 and 135 each coordinate xanthine. Residues aspartate 92–threonine 96 and tryptophan 134–isoleucine 135 contribute to the GMP site.

Belongs to the purine/pyrimidine phosphoribosyltransferase family. XGPT subfamily. In terms of assembly, homotetramer. The cofactor is Mg(2+).

Its subcellular location is the cell inner membrane. It carries out the reaction GMP + diphosphate = guanine + 5-phospho-alpha-D-ribose 1-diphosphate. The enzyme catalyses XMP + diphosphate = xanthine + 5-phospho-alpha-D-ribose 1-diphosphate. The catalysed reaction is IMP + diphosphate = hypoxanthine + 5-phospho-alpha-D-ribose 1-diphosphate. It functions in the pathway purine metabolism; GMP biosynthesis via salvage pathway; GMP from guanine: step 1/1. The protein operates within purine metabolism; XMP biosynthesis via salvage pathway; XMP from xanthine: step 1/1. In terms of biological role, purine salvage pathway enzyme that catalyzes the transfer of the ribosyl-5-phosphate group from 5-phospho-alpha-D-ribose 1-diphosphate (PRPP) to the N9 position of the 6-oxopurines guanine and xanthine to form the corresponding ribonucleotides GMP (guanosine 5'-monophosphate) and XMP (xanthosine 5'-monophosphate), with the release of PPi. To a lesser extent, also acts on hypoxanthine. This is Xanthine-guanine phosphoribosyltransferase from Serratia proteamaculans (strain 568).